Consider the following 488-residue polypeptide: MPKVKALQCALALEISSVTCPGVVLKDKEDIYLSICVFGQYKKTQCVPATFPLVFNARMVFEKVFPDAVDPGDVVTQLEYDTAVFELIQLVPPVGETLSTYDENTRDFMFPGPNQMSGHHDSNRQVTMRRISGLRGNAPRLEFSTTSVITECLISSRKCHTQDKFIYHLAPVEKSHGRLQNRTSRSQKKKSKSPERSKYCINAKNYEQPTISSKSHSPSPYTKRRMCELSEDTRRRLAHLNLGPYEFKKETDKPPFVIRHVDPPSPRADTLLGSSGRDCERDGWSRVHNDHSHLGCCRPKDYKVIRTPHGRDFDDSLEKCEEYLSPRSCSKPRHSARTLLVHSAPSTMPKHSPSPVLNRASLRERFHSDWCSPSNCDEIHDRVKNVLKSHQAHQRHLYDERDLEKDDELELKRSLLCRDSAYDSDPEYSSCQQPRGTFHLDDGEYWSNRAASYKGKSHRPIFENSMDKMYRNLYKKACSSASHTQESF.

The signal sequence occupies residues 1–20; that stretch reads MPKVKALQCALALEISSVTC. The segment at 176-199 is disordered; the sequence is HGRLQNRTSRSQKKKSKSPERSKY. An N-linked (GlcNAc...) asparagine glycan is attached at asparagine 181. A phosphoserine mark is found at serine 217 and serine 219. Residue lysine 248 forms a Glycyl lysine isopeptide (Lys-Gly) (interchain with G-Cter in SUMO2) linkage. Residues 256-275 form a disordered region; sequence FVIRHVDPPSPRADTLLGSS. Residues serine 265, serine 274, serine 325, serine 343, serine 346, serine 354, serine 424, serine 465, and serine 487 each carry the phosphoserine modification.

It belongs to the SPATA6 family. In terms of assembly, interacts with MYL6.

It is found in the secreted. It localises to the cell projection. The protein localises to the cilium. The protein resides in the flagellum. Required for formation of the sperm connecting piece during spermiogenesis. Sperm connecting piece is essential for linking the developing flagellum to the head during late spermiogenesis. May be involved in myosin-based microfilament transport through interaction with myosin subunits. The protein is Spermatogenesis-associated protein 6 (SPATA6) of Homo sapiens (Human).